We begin with the raw amino-acid sequence, 211 residues long: uncharacterized protein (211 aa).

The signal sequence occupies residues 1–20 (MSRVQISTVLAIDTATPAVT).

It to M.leprae ML0378.

This is an uncharacterized protein from Mycobacterium tuberculosis (strain CDC 1551 / Oshkosh).